The chain runs to 450 residues: Phosphoglucosamine mutase (450 aa).

Residue Ser101 is the Phosphoserine intermediate of the active site. Positions 101, 242, 244, and 246 each coordinate Mg(2+). Ser101 carries the post-translational modification Phosphoserine.

This sequence belongs to the phosphohexose mutase family. Requires Mg(2+) as cofactor. In terms of processing, activated by phosphorylation.

The enzyme catalyses alpha-D-glucosamine 1-phosphate = D-glucosamine 6-phosphate. Its function is as follows. Catalyzes the conversion of glucosamine-6-phosphate to glucosamine-1-phosphate. The polypeptide is Phosphoglucosamine mutase (Rhodopseudomonas palustris (strain BisA53)).